We begin with the raw amino-acid sequence, 549 residues long: Arginine--tRNA ligase (549 aa).

The short motif at 122-132 is the 'HIGH' region element; the sequence is ANPTGFLHLGH.

This sequence belongs to the class-I aminoacyl-tRNA synthetase family. As to quaternary structure, monomer.

It localises to the cytoplasm. The catalysed reaction is tRNA(Arg) + L-arginine + ATP = L-arginyl-tRNA(Arg) + AMP + diphosphate. This is Arginine--tRNA ligase from Mycoplasmoides gallisepticum (strain R(low / passage 15 / clone 2)) (Mycoplasma gallisepticum).